The chain runs to 615 residues: Delta(14)-sterol reductase LBR (615 aa).

The Tudor domain occupies 1-62 (MPSRKFADGE…DIKPLTSFRQ (62 aa)). Topologically, residues 1-211 (MPSRKFADGE…IRAKDLEFGG (211 aa)) are nuclear. A disordered region spans residues 52–109 (NDIKPLTSFRQRKGGSTSSSPSRRRGSRSRSRSRSPGRPPKSARRSASASHQADIKEA). Lysine 55 bears the N6-acetyllysine mark. The residue at position 58 (threonine 58) is a Phosphothreonine. Phosphoserine is present on residues serine 59 and serine 67. Phosphoserine; by CDK1 occurs at positions 71 and 86. Positions 73-86 (SRRRGSRSRSRSRS) are enriched in basic residues. Serine 97 and serine 99 each carry phosphoserine. Threonine 118 bears the Phosphothreonine mark. Serine 128 bears the Phosphoserine mark. Phosphothreonine is present on threonine 200. 8 consecutive transmembrane segments (helical) span residues 212 to 232 (VPGV…LLLM), 258 to 278 (VFGV…LPIG), 299 to 319 (FYAF…GVEF), 326 to 346 (FLQF…YLYM), 386 to 406 (FCEL…MLLA), 447 to 467 (IIHD…VPFI), 481 to 501 (EVSW…YVIF), and 561 to 581 (PCGF…MLLV). Residues lysine 594 and lysine 601 each carry the N6-acetyllysine modification.

This sequence belongs to the ERG4/ERG24 family. As to quaternary structure, interacts with CBX5. Interacts with DNA. Interaction with DNA is sequence independent with higher affinity for supercoiled and relaxed circular DNA than linear DNA. Interacts with lamin B. Interacts with CLNK. Interacts with TMEM147; promoting LBR localization to the nucleus inner membrane. Post-translationally, phosphorylated by CDK1 in mitosis when the inner nuclear membrane breaks down into vesicles that dissociate from the lamina and the chromatin. It is phosphorylated by different protein kinases in interphase when the membrane is associated with these structures. Phosphorylation of LBR and HP1 proteins may be responsible for some of the alterations in chromatin organization and nuclear structure which occur at various times during the cell cycle. Phosphorylated by SRPK1. In late anaphase LBR is dephosphorylated, probably by PP1 and/or PP2A, allowing reassociation with chromatin. As to expression, expressed in the bone marrow, liver, heart, adrenal gland, lung, placenta and uterus. Expressed in osteoclasts and osteoblast-like cells.

It localises to the nucleus inner membrane. Its subcellular location is the endoplasmic reticulum membrane. The protein localises to the cytoplasm. It is found in the nucleus. The enzyme catalyses 5alpha-cholest-8,14-dien-3beta-ol + NADPH + H(+) = 5alpha-cholest-8-en-3beta-ol + NADP(+). It catalyses the reaction 4,4-dimethyl-5alpha-cholesta-8,24-dien-3beta-ol + NADP(+) = 4,4-dimethyl-5alpha-cholesta-8,14,24-trien-3beta-ol + NADPH + H(+). It carries out the reaction 4,4-dimethyl-8,14-cholestadien-3beta-ol + NADPH + H(+) = 4,4-dimethyl-5alpha-cholest-8-en-3beta-ol + NADP(+). Its pathway is steroid biosynthesis; cholesterol biosynthesis. Its function is as follows. Catalyzes the reduction of the C14-unsaturated bond of lanosterol, as part of the metabolic pathway leading to cholesterol biosynthesis. Plays a critical role in myeloid cell cholesterol biosynthesis which is essential to both myeloid cell growth and functional maturation. Mediates the activation of NADPH oxidases, perhaps by maintaining critical levels of cholesterol required for membrane lipid raft formation during neutrophil differentiation. Anchors the lamina and the heterochromatin to the inner nuclear membrane. The polypeptide is Delta(14)-sterol reductase LBR (LBR) (Homo sapiens (Human)).